Here is a 64-residue protein sequence, read N- to C-terminus: Small ribosomal subunit protein bS21 (64 aa).

It belongs to the bacterial ribosomal protein bS21 family.

The protein is Small ribosomal subunit protein bS21 of Anaeromyxobacter dehalogenans (strain 2CP-1 / ATCC BAA-258).